A 251-amino-acid polypeptide reads, in one-letter code: Uroporphyrinogen-III synthase (251 aa).

The interval 231–251 (PAPNPESLASSIVAFDEENSS) is disordered.

This sequence belongs to the uroporphyrinogen-III synthase family.

The catalysed reaction is hydroxymethylbilane = uroporphyrinogen III + H2O. It functions in the pathway porphyrin-containing compound metabolism; protoporphyrin-IX biosynthesis; coproporphyrinogen-III from 5-aminolevulinate: step 3/4. Catalyzes cyclization of the linear tetrapyrrole, hydroxymethylbilane, to the macrocyclic uroporphyrinogen III. This chain is Uroporphyrinogen-III synthase (ups1), found in Schizosaccharomyces pombe (strain 972 / ATCC 24843) (Fission yeast).